The primary structure comprises 240 residues: Probable transcriptional activator (240 aa).

The essential for the oxygen-regulated activity stretch occupies residues 17–28; it reads CTSCQARHGVVC. The HTH crp-type domain occupies 158–232; that stretch reads RTAEEKVASL…FRHIIVPDMD (75 aa). Residues 191–210 constitute a DNA-binding region (H-T-H motif); that stretch reads RAEIADFLGLTIETVSRQMT.

In terms of biological role, promotes the microaerobic and symbiotic induction of fixN, possibly by binding to the FNR consensus binding site upstream of fixN. This is Probable transcriptional activator (fnrN) from Rhizobium leguminosarum bv. viciae.